We begin with the raw amino-acid sequence, 476 residues long: MKPVLPDYSKAGVLIVGDVMLDRYWYGPTGRISPEAPVPVVKVEQSEERPGGAANVAMNIASLGGHAHIIGLTGQDEPANVLANKLTSLKVHCDFVALPDYPTITKLRVLSRGQQLIRLDFEDKFENTDAQLILSRMESALPKVRAVILSDYAKGALEHVQQFIQKAKAAGVPVFIDPKGSDFERYRGASLLTPNMSEFEAVVGKVKSEQELVEKGFALIEKFDLGALLVTRSEHGMTLLRRGLEPFHLPTQAKEVYDVTGAGDTVISVLAASVAAGKALDEACALANAAAGVVVGKLGTSTVSTIELAEAVHGSKDTDYGVISEDALIEAVKKAQARGEKVVMTNGCFDILHAGHVSYLNHAAELGDRLIVAVNTDESVKRLKGPGRPVNSTDRRMAVLAGLGAVDWVVPFSEDTPQRLIAAILPNLLVKGGDYKPEEIAGGKEVIAAGGEVKVLNFEEGCSTTEIIEAIKGGRG.

Positions 1 to 318 are ribokinase; that stretch reads MKPVLPDYSK…AEAVHGSKDT (318 aa). ATP is bound at residue 195 to 198; sequence NMSE. Residue Asp264 is part of the active site. Positions 344-476 are cytidylyltransferase; it reads MTNGCFDILH…IIEAIKGGRG (133 aa).

The protein in the N-terminal section; belongs to the carbohydrate kinase PfkB family. It in the C-terminal section; belongs to the cytidylyltransferase family. In terms of assembly, homodimer.

It carries out the reaction D-glycero-beta-D-manno-heptose 7-phosphate + ATP = D-glycero-beta-D-manno-heptose 1,7-bisphosphate + ADP + H(+). The enzyme catalyses D-glycero-beta-D-manno-heptose 1-phosphate + ATP + H(+) = ADP-D-glycero-beta-D-manno-heptose + diphosphate. It participates in nucleotide-sugar biosynthesis; ADP-L-glycero-beta-D-manno-heptose biosynthesis; ADP-L-glycero-beta-D-manno-heptose from D-glycero-beta-D-manno-heptose 7-phosphate: step 1/4. Its pathway is nucleotide-sugar biosynthesis; ADP-L-glycero-beta-D-manno-heptose biosynthesis; ADP-L-glycero-beta-D-manno-heptose from D-glycero-beta-D-manno-heptose 7-phosphate: step 3/4. Its function is as follows. Catalyzes the phosphorylation of D-glycero-D-manno-heptose 7-phosphate at the C-1 position to selectively form D-glycero-beta-D-manno-heptose-1,7-bisphosphate. Functionally, catalyzes the ADP transfer from ATP to D-glycero-beta-D-manno-heptose 1-phosphate, yielding ADP-D-glycero-beta-D-manno-heptose. This chain is Bifunctional protein HldE, found in Vibrio cholerae serotype O1 (strain ATCC 39541 / Classical Ogawa 395 / O395).